Reading from the N-terminus, the 652-residue chain is Transmembrane 9 superfamily member 12 (652 aa).

Positions 1 to 20 are cleaved as a signal peptide; it reads MFGVYRVFVLLVFVSQLCNG. The Lumenal portion of the chain corresponds to 21–286; that stretch reads FYLPGSYMHT…LKMEGARVHW (266 aa). The helical transmembrane segment at 287–307 threads the bilayer; that stretch reads FSILNSLMVIFFLAGIVFVIF. Topologically, residues 308–362 are cytoplasmic; sequence LRTVRRDLTKYEELDKEAQAQMNEELSGWKLVVGDVFREPEMSKLLCIMVGDGVR. A helical membrane pass occupies residues 363 to 383; that stretch reads ITGMAVVTIVFAALGFMSPAS. The Lumenal portion of the chain corresponds to 384 to 386; sequence RGM. The chain crosses the membrane as a helical span at residues 387–407; it reads LLTGMIILYLFLGIVAGYAGV. Over 408–426 the chain is Cytoplasmic; the sequence is RLWRTVKGTSEGWRSLSWS. The helical transmembrane segment at 427–447 threads the bilayer; sequence IACFFPGIAFVILTVLNFLLW. The Lumenal segment spans residues 448–460; the sequence is SSNSTGAIPISLY. Residues 461 to 481 form a helical membrane-spanning segment; sequence FELLALWFCISVPLTLFGGFL. Residues 482–510 are Cytoplasmic-facing; it reads GTRAEAIQFPVRTNQIPREIPERKYPSWL. The chain crosses the membrane as a helical span at residues 511-531; sequence LVLGAGTLPFGTLFIELFFIF. At 532–541 the chain is on the lumenal side; the sequence is SSIWLGRFYY. Residues 542 to 562 form a helical membrane-spanning segment; sequence VFGFLLIVLLLLVVVCAEVSV. Topologically, residues 563-580 are cytoplasmic; sequence VLTYMHLCVEDWRWWWKA. A helical transmembrane segment spans residues 581 to 601; the sequence is FYASGSVALYVFAYSINYLVF. Residues 602 to 613 are Lumenal-facing; the sequence is DLQSLSGPVSAM. The chain crosses the membrane as a helical span at residues 614-634; sequence LYIGYSLLMAIAIMLATGTIG. The Cytoplasmic segment spans residues 635 to 652; it reads FLTSFYFVHYLFSSVKID. Positions 641-646 match the Endoplasmic reticulum export signal motif; the sequence is FVHYLF. The Golgi retention signal signature appears at 650 to 652; it reads KID.

Belongs to the nonaspanin (TM9SF) (TC 9.A.2) family.

The protein localises to the endosome membrane. It is found in the golgi apparatus membrane. In Arabidopsis thaliana (Mouse-ear cress), this protein is Transmembrane 9 superfamily member 12.